Consider the following 357-residue polypeptide: Fructose-1,6-bisphosphatase class 1 2 (357 aa).

4 residues coordinate Mg(2+): glutamate 90, aspartate 112, leucine 114, and aspartate 115. Residues 115 to 118 (DGSS) and asparagine 206 each bind substrate. Mg(2+) is bound at residue glutamate 278.

This sequence belongs to the FBPase class 1 family. Homotetramer. It depends on Mg(2+) as a cofactor.

The protein resides in the cytoplasm. It catalyses the reaction beta-D-fructose 1,6-bisphosphate + H2O = beta-D-fructose 6-phosphate + phosphate. The protein operates within carbohydrate biosynthesis; gluconeogenesis. This Dechloromonas aromatica (strain RCB) protein is Fructose-1,6-bisphosphatase class 1 2.